The following is a 110-amino-acid chain: PHD finger-like domain-containing protein 5B (110 aa).

Belongs to the PHF5 family.

The protein is PHD finger-like domain-containing protein 5B of Arabidopsis thaliana (Mouse-ear cress).